Consider the following 69-residue polypeptide: Toxin Tma3 (69 aa).

The region spanning 2-66 is the LCN-type CS-alpha/beta domain; that stretch reads KDDYPVDTAK…SPTKKSGRCN (65 aa). 4 disulfides stabilise this stretch: Cys14–Cys65, Cys18–Cys41, Cys27–Cys48, and Cys31–Cys50.

The protein belongs to the long (4 C-C) scorpion toxin superfamily. Sodium channel inhibitor family. As to expression, expressed by the venom gland.

The protein resides in the secreted. Inhibits voltage-gated sodium channels (Nav). This toxin shows insect lethality against crickets. This Tityus macrochirus (Scorpion) protein is Toxin Tma3.